Reading from the N-terminus, the 275-residue chain is Nitrogenase iron protein 2 (275 aa).

Gly-9 to Ser-16 contributes to the ATP binding site. Cys-97 is a [4Fe-4S] cluster binding site. Residue Arg-100 is modified to ADP-ribosylarginine; by dinitrogenase reductase ADP-ribosyltransferase. Position 132 (Cys-132) interacts with [4Fe-4S] cluster.

This sequence belongs to the NifH/BchL/ChlL family. In terms of assembly, homodimer. [4Fe-4S] cluster serves as cofactor. The reversible ADP-ribosylation of Arg-100 inactivates the nitrogenase reductase and regulates nitrogenase activity.

The enzyme catalyses N2 + 8 reduced [2Fe-2S]-[ferredoxin] + 16 ATP + 16 H2O = H2 + 8 oxidized [2Fe-2S]-[ferredoxin] + 2 NH4(+) + 16 ADP + 16 phosphate + 6 H(+). Functionally, the key enzymatic reactions in nitrogen fixation are catalyzed by the nitrogenase complex, which has 2 components: the iron protein (component 2) and a component 1 which is either a molybdenum-iron protein, a vanadium-iron, or an iron-iron protein. In Rhodobacter capsulatus (Rhodopseudomonas capsulata), this protein is Nitrogenase iron protein 2 (anfH).